The sequence spans 319 residues: Ribonuclease Z (319 aa).

Residues His62, His64, Asp66, His67, His145, Asp215, and His273 each contribute to the Zn(2+) site. The Proton acceptor role is filled by Asp66.

The protein belongs to the RNase Z family. In terms of assembly, homodimer. The cofactor is Zn(2+).

It carries out the reaction Endonucleolytic cleavage of RNA, removing extra 3' nucleotides from tRNA precursor, generating 3' termini of tRNAs. A 3'-hydroxy group is left at the tRNA terminus and a 5'-phosphoryl group is left at the trailer molecule.. Functionally, zinc phosphodiesterase, which displays some tRNA 3'-processing endonuclease activity. Probably involved in tRNA maturation, by removing a 3'-trailer from precursor tRNA. In Borrelia recurrentis (strain A1), this protein is Ribonuclease Z.